Consider the following 138-residue polypeptide: Large ribosomal subunit protein bL19 (138 aa).

Belongs to the bacterial ribosomal protein bL19 family.

This protein is located at the 30S-50S ribosomal subunit interface and may play a role in the structure and function of the aminoacyl-tRNA binding site. The chain is Large ribosomal subunit protein bL19 from Rickettsia akari (strain Hartford).